We begin with the raw amino-acid sequence, 2201 residues long: Voltage-dependent T-type calcium channel subunit alpha-1I (2201 aa).

The segment at 1–45 is disordered; that stretch reads MADSNLPPSSAAAPAPEPGITEQPGPRSPPPSPPGLEEPLEGTNP. The Cytoplasmic segment spans residues 1-76; the sequence is MADSNLPPSS…RNWCIKMVCN (76 aa). A compositionally biased stretch (pro residues) spans 26–36; that stretch reads PRSPPPSPPGL. The stretch at 64-399 is one I repeat; that stretch reads TSPRNWCIKM…LCLVVIATQF (336 aa). A helical membrane pass occupies residues 77 to 97; the sequence is PWFECVSMLVILLNCVTLGMY. The Extracellular portion of the chain corresponds to 98–115; that stretch reads QPCDDMECLSDRCKILQV. The helical transmembrane segment at 116–137 threads the bilayer; that stretch reads FDDFIFIFFAMEMVLKMVALGI. Over 138–146 the chain is Cytoplasmic; the sequence is FGKKCYLGD. A helical transmembrane segment spans residues 147-166; that stretch reads TWNRLDFFIVMAGMVEYSLD. Over 167-171 the chain is Extracellular; sequence LQNIN. An N-linked (GlcNAc...) asparagine glycan is attached at asparagine 171. Residues 172–189 form a helical membrane-spanning segment; it reads LSAIRTVRVLRPLKAINR. At 190-209 the chain is on the cytoplasmic side; sequence VPSMRILVNLLLDTLPMLGN. Residues 210-230 traverse the membrane as a helical segment; the sequence is VLLLCFFVFFIFGIIGVQLWA. Over 231–371 the chain is Extracellular; that stretch reads GLLRNRCFLE…YYVMDAHSFY (141 aa). N-linked (GlcNAc...) asparagine glycosylation is found at asparagine 242 and asparagine 309. A helical transmembrane segment spans residues 372-396; sequence NFIYFILLIIVGSFFMINLCLVVIA. The Cytoplasmic portion of the chain corresponds to 397–598; sequence TQFSETKQRE…EKLRGIVDSK (202 aa). 2 disordered regions span residues 463-500 and 513-579; these read QAMGPGTPAPAKPGPHAKEPSHCKLCPRHSPLDPTPHT and PSSC…AARL. Over residues 545 to 554 the composition is skewed to low complexity; sequence SAEAEANGDG. One copy of the II repeat lies at 584–823; sequence WRETREKLRG…LLVAILVEGF (240 aa). Residues 599–619 form a helical membrane-spanning segment; that stretch reads YFNRGIMMAILVNTVSMGIEH. Topologically, residues 620–632 are extracellular; it reads HEQPEELTNILEI. A helical transmembrane segment spans residues 633–654; the sequence is CNVVFTSMFALEMILKLAAFGL. Residues 655–660 lie on the Cytoplasmic side of the membrane; sequence FDYLRN. A helical transmembrane segment spans residues 661–679; sequence PYNIFDSIIVIISIWEIVG. The Extracellular portion of the chain corresponds to 680–687; the sequence is QADGGLSV. Residues 688-711 form a helical membrane-spanning segment; the sequence is LRTFRLLRVLKLVRFMPALRRQLV. The Cytoplasmic segment spans residues 712–722; that stretch reads VLMKTMDNVAT. The chain crosses the membrane as a helical span at residues 723 to 743; the sequence is FCMLLMLFIFIFSILGMHIFG. The Extracellular portion of the chain corresponds to 744-795; sequence CKFSLRTDTGDTVPDRKNFDSLLWAIVTVFQILTQEDWNVVLYNGMASTTPW. The helical transmembrane segment at 796 to 820 threads the bilayer; sequence ASLYFVALMTFGNYVLFNLLVAILV. At 821–1125 the chain is on the cytoplasmic side; that stretch reads EGFQAEGDAN…NKFRILCQTI (305 aa). The segment at 936–969 is disordered; that stretch reads WGRSGTWASRRSSWNSLKHKPPSAEHESLLSGEG. Over residues 941–951 the composition is skewed to polar residues; sequence TWASRRSSWNS. Serine 1017 is subject to Phosphoserine. Residues 1116-1393 form an III repeat; sequence NKFRILCQTI…MFVGVVVENF (278 aa). A helical transmembrane segment spans residues 1126–1148; that stretch reads IAHKLFDYVVLAFIFLNCITIAL. Topologically, residues 1149–1166 are extracellular; the sequence is ERPQIEAGSTERIFLTVS. Residues 1167 to 1187 traverse the membrane as a helical segment; sequence NYIFTAIFVGEMTLKVVSLGL. At 1188–1197 the chain is on the cytoplasmic side; sequence YFGEQAYLRS. Residues 1198-1217 form a helical membrane-spanning segment; that stretch reads SWNVLDGFLVFVSIIDIVVS. At 1218–1231 the chain is on the extracellular side; that stretch reads VASAGGAKILGVLR. Residues 1232–1253 traverse the membrane as a helical segment; the sequence is VLRLLRTLRPLRVISRAPGLKL. Residues 1254-1263 lie on the Cytoplasmic side of the membrane; that stretch reads VVETLISSLK. A helical transmembrane segment spans residues 1264–1287; it reads PIGNIVLICCAFFIIFGILGVQLF. Residues 1288–1364 lie on the Extracellular side of the membrane; the sequence is KGKFYHCLGV…DQQPVTNHNP (77 aa). 2 N-linked (GlcNAc...) asparagine glycosylation sites follow: asparagine 1301 and asparagine 1304. The helical transmembrane segment at 1365-1390 threads the bilayer; the sequence is WMLLYFISFLLIVSFFVLNMFVGVVV. The Cytoplasmic segment spans residues 1391-1445; the sequence is ENFHKCRQHQEAEEARRREEKRLRRLEKKRRKAQRLPYYATYCPTRLLIHSMCTS. One copy of the IV repeat lies at 1431–1692; the sequence is TYCPTRLLIH…VVVAVLMKHL (262 aa). The helical transmembrane segment at 1446 to 1466 threads the bilayer; that stretch reads HYLDIFITFIICLNVVTMSLE. At 1467–1480 the chain is on the extracellular side; the sequence is HYNQPTSLETALKY. A helical transmembrane segment spans residues 1481-1502; it reads CNYMFTTVFVLEAVLKLVAFGL. At 1503–1509 the chain is on the cytoplasmic side; sequence RRFFKDR. A helical membrane pass occupies residues 1510–1528; that stretch reads WNQLDLAIVLLSVMGITLE. At 1529–1542 the chain is on the extracellular side; it reads EIEINAALPINPTI. Residues 1543–1566 traverse the membrane as a helical segment; that stretch reads IRIMRVLRIARVLKLLKMATGMRA. At 1567–1580 the chain is on the cytoplasmic side; that stretch reads LLDTVVQALPQVGN. A helical membrane pass occupies residues 1581–1601; sequence LGLLFMLLFFIYAALGVELFG. Residues 1602–1664 are Extracellular-facing; it reads KLVCNDENPC…RSCLSSLQFV (63 aa). The chain crosses the membrane as a helical span at residues 1665 to 1692; that stretch reads SPLYFVSFVLTAQFVLINVVVAVLMKHL. Over 1693–1835 the chain is Cytoplasmic; sequence DDSNKEAQED…EVQLAETEAF (143 aa). 5 disordered regions span residues 1846–1876, 1916–1938, 1992–2045, 2057–2105, and 2126–2201; these read LLGDDLSLEDPTACPPGRKDSKGELDPPEPM, LKHDSSQAPPSPFSPDGSSPLLQ, SDTS…TRRR, RGLR…HSET, and LTPA…KRKR. A compositionally biased stretch (low complexity) spans 1992 to 2007; the sequence is SDTSLDASPSSSAGSL. Composition is skewed to polar residues over residues 2008–2019 and 2066–2075; these read QTTLEDSLTLSD and HSSGGSTSPG. The span at 2077 to 2090 shows a compositional bias: basic and acidic residues; sequence THHDSMDPSDEEGR.

This sequence belongs to the calcium channel alpha-1 subunit (TC 1.A.1.11) family. CACNA1I subfamily. As to quaternary structure, interacts with CATSPER1 and CATSPER2, leading to suppress T-type calcium channel activity. Post-translationally, in response to raising of intracellular calcium, the T-type channels are activated by CaM-kinase II. In terms of tissue distribution, brain.

It localises to the membrane. The catalysed reaction is Ca(2+)(in) = Ca(2+)(out). Functionally, voltage-sensitive calcium channels (VSCC) mediate the entry of calcium ions into excitable cells and are also involved in a variety of calcium-dependent processes, including muscle contraction, hormone or neurotransmitter release, gene expression, cell motility, cell division and cell death. This channel gives rise to T-type calcium currents. T-type calcium channels belong to the 'low-voltage activated (LVA)' group and are strongly blocked by nickel and mibefradil. A particularity of this type of channels is an opening at quite negative potentials, and a voltage-dependent inactivation. T-type channels serve pacemaking functions in both central neurons and cardiac nodal cells and support calcium signaling in secretory cells and vascular smooth muscle. They may also be involved in the modulation of firing patterns of neurons which is important for information processing as well as in cell growth processes. Gates in voltage ranges similar to, but higher than alpha 1G or alpha 1H. Voltage-sensitive calcium channels (VSCC) mediate the entry of calcium ions into excitable cells and are also involved in a variety of calcium-dependent processes, including muscle contraction, hormone or neurotransmitter release, gene expression, cell motility, cell division and cell death. This channel gives rise to T-type calcium currents. This is Voltage-dependent T-type calcium channel subunit alpha-1I (Cacna1i) from Rattus norvegicus (Rat).